Reading from the N-terminus, the 24-residue chain is Fibrinogen gamma chain (24 aa).

In terms of assembly, heterohexamer; disulfide linked. Contains 2 sets of 3 non-identical chains (alpha, beta and gamma). The 2 heterotrimers are in head to head conformation with the N-termini in a small central domain. Post-translationally, conversion of fibrinogen to fibrin is triggered by thrombin, which cleaves fibrinopeptides A and B from alpha and beta chains, and thus exposes the N-terminal polymerization sites responsible for the formation of the soft clot. The soft clot is converted into the hard clot by factor XIIIA which catalyzes the epsilon-(gamma-glutamyl)lysine cross-linking between gamma chains (stronger) and between alpha chains (weaker) of different monomers.

The protein resides in the secreted. In terms of biological role, together with fibrinogen alpha (FGA) and fibrinogen beta (FGB), polymerizes to form an insoluble fibrin matrix. Has a major function in hemostasis as one of the primary components of blood clots. In addition, functions during the early stages of wound repair to stabilize the lesion and guide cell migration during re-epithelialization. Was originally thought to be essential for platelet aggregation, based on in vitro studies using anticoagulated blood. However, subsequent studies have shown that it is not absolutely required for thrombus formation in vivo. Enhances expression of SELP in activated platelets via an ITGB3-dependent pathway. Maternal fibrinogen is essential for successful pregnancy. Fibrin deposition is also associated with infection, where it protects against IFNG-mediated hemorrhage. May also facilitate the antibacterial immune response via both innate and T-cell mediated pathways. The protein is Fibrinogen gamma chain (FGG) of Canis lupus familiaris (Dog).